The primary structure comprises 428 residues: MQWTKSEQLYEEALRHIVGGVNSPSRSYKAVGGGAPVVMERAQGAYFWDVDGNKYIDYLAAYGPIITGHAHPHITAAIQRAAETGVLYGTPTPHEITFAKMLKEAIPSLEKVRFVNSGTEAVMTTIRVARAYTGRSKIVKFAGCYHGHSDLVLVAAGSGPSTLGTPDSAGVPQSIAHEVITVPYNDVESFREAMNVWGEHVAAVLVEPIVGNFGIVLPKPGFLEAVNDIAHEAGALVIYDEVITAFRFMYGGAQNLLGIEPDMTAMGKIIGGGLPIGAYGGRQDIMEQVAPLGPAYQAGTMAGNPASMLAGIACLEVLKQEGVYEHLDRLGAMLEEGIMTHARQCGLPVTINRLKGALTVFFTEEKVENYEQAQRSDGELFAKFFKLMLKQGVNLAPSKYEAWFITLAHTEDDIAYTIDAVGRAFRQL.

Position 268 is an N6-(pyridoxal phosphate)lysine (Lys268).

It belongs to the class-III pyridoxal-phosphate-dependent aminotransferase family. HemL subfamily. In terms of assembly, homodimer. Pyridoxal 5'-phosphate is required as a cofactor.

The protein resides in the cytoplasm. It catalyses the reaction (S)-4-amino-5-oxopentanoate = 5-aminolevulinate. It functions in the pathway porphyrin-containing compound metabolism; protoporphyrin-IX biosynthesis; 5-aminolevulinate from L-glutamyl-tRNA(Glu): step 2/2. In Geobacillus thermodenitrificans (strain NG80-2), this protein is Glutamate-1-semialdehyde 2,1-aminomutase 1.